Here is a 263-residue protein sequence, read N- to C-terminus: 3-oxo-5-alpha-steroid 4-dehydrogenase 1 (263 aa).

Transmembrane regions (helical) follow at residues 16-33, 90-110, 115-135, 155-175, and 213-233; these read MLAA…AVLA, ILLA…PFLM, PMPL…GYLQ, FLIG…SDHI, and YALA…FCFL.

Belongs to the steroid 5-alpha reductase family.

The protein localises to the microsome membrane. It localises to the endoplasmic reticulum membrane. The catalysed reaction is a 3-oxo-5alpha-steroid + NADP(+) = a 3-oxo-Delta(4)-steroid + NADPH + H(+). It carries out the reaction 5alpha-pregnane-3,20-dione + NADP(+) = progesterone + NADPH + H(+). It catalyses the reaction 17beta-hydroxy-5alpha-androstan-3-one + NADP(+) = testosterone + NADPH + H(+). The enzyme catalyses androst-4-ene-3,17-dione + NADPH + H(+) = 5alpha-androstan-3,17-dione + NADP(+). Its function is as follows. Converts testosterone into 5-alpha-dihydrotestosterone and progesterone or corticosterone into their corresponding 5-alpha-3-oxosteroids. It plays a central role in sexual differentiation and androgen physiology. This Macaca fascicularis (Crab-eating macaque) protein is 3-oxo-5-alpha-steroid 4-dehydrogenase 1 (SRD5A1).